Consider the following 146-residue polypeptide: MLTINSIKNGIVIDHIKAGHGIKIYNYLKLGEAEFPTALIMNAISKKNKAKDIIKIENVMDLDLAVLGFLDPNITVNIIEDEKIRQKIQLKLPSEVNNIIKCSNPRCVTSVESYIPHKFKLVDEEKGEYKCEYCDEIYKGAKALEI.

Zn(2+) contacts are provided by C102, C107, C131, and C134.

Belongs to the PyrI family. Contains catalytic and regulatory chains. The cofactor is Zn(2+).

Involved in allosteric regulation of aspartate carbamoyltransferase. This Clostridium acetobutylicum (strain ATCC 824 / DSM 792 / JCM 1419 / IAM 19013 / LMG 5710 / NBRC 13948 / NRRL B-527 / VKM B-1787 / 2291 / W) protein is Aspartate carbamoyltransferase regulatory chain.